We begin with the raw amino-acid sequence, 743 residues long: MMTQANAYFYDGADVALLNGQYTDVFSLLGMHSANEGKALIVRCFLRNAISVDVISIKDGRKVASLDKVNEQGLFAGTLGRRVKPFLYLLRVEYPLCQLDIVDPYQFDSLLNSDDIYLFGEGSAERAYEFLGANWRQTQGVEGVHFCVWAPNAKRVSVVGDFNHWDDTRHVMRQHLANGLWELFLPNVVEGAHYKFDLVYQNGERHTKSDPMATQMECAPHNASIVPPKAHHSWNDTAWMSKRAATAWHKAPMSAYEVHLGSWRRKGEQGEQYLDYQDLIEQLIPYVKEQGFTHIELMPISEFPFDGSWGYQPVGLYAPTHRFGDANGLKAFVDACHQAGIGIILDWVSAHFPKDPHGLVRFDGTCLYEHEDPRKGTHPDWDTLIYNYDRGEVRSFLLSNACYWLREFHFDGLRLDAVSSMLYLDYSREPGQWLPNAYGGRENLEAISFLQILNQRLYQAFPGICMIAEESTAFAGVTKPTDQQGLGFGFKWNMGWMNDSLSYLGRDPLYRQFHHHQLTFSLMYAYTEQFMLSVSHDEVVHGKGSLLHKIPGDDWQKFATLRAYYGFMWGHPGKKLLFMGCEFGQRNEWNHNQSLDWHLLAYEPHQGVQRWLKDLNHLYQAMPALSVQDYEGAGFSWLDCENSRDSIFTFVRYGLAGDAPLVFVINMTPQLHTGFRIGLPLAGDYREYLNSDSQIYGGSNQGNAGTVVAESLPWQGMAQSALITVPPLGCLVIGPATGLAEAN.

The Nucleophile role is filled by Asp416. Residue Glu469 is the Proton donor of the active site.

The protein belongs to the glycosyl hydrolase 13 family. GlgB subfamily. Monomer.

It carries out the reaction Transfers a segment of a (1-&gt;4)-alpha-D-glucan chain to a primary hydroxy group in a similar glucan chain.. Its pathway is glycan biosynthesis; glycogen biosynthesis. Its function is as follows. Catalyzes the formation of the alpha-1,6-glucosidic linkages in glycogen by scission of a 1,4-alpha-linked oligosaccharide from growing alpha-1,4-glucan chains and the subsequent attachment of the oligosaccharide to the alpha-1,6 position. This chain is 1,4-alpha-glucan branching enzyme GlgB, found in Shewanella baltica (strain OS155 / ATCC BAA-1091).